We begin with the raw amino-acid sequence, 346 residues long: Phosphoribosylformylglycinamidine cyclo-ligase (346 aa).

Belongs to the AIR synthase family.

The protein resides in the cytoplasm. The catalysed reaction is 2-formamido-N(1)-(5-O-phospho-beta-D-ribosyl)acetamidine + ATP = 5-amino-1-(5-phospho-beta-D-ribosyl)imidazole + ADP + phosphate + H(+). It participates in purine metabolism; IMP biosynthesis via de novo pathway; 5-amino-1-(5-phospho-D-ribosyl)imidazole from N(2)-formyl-N(1)-(5-phospho-D-ribosyl)glycinamide: step 2/2. This is Phosphoribosylformylglycinamidine cyclo-ligase from Prochlorococcus marinus (strain NATL2A).